Consider the following 306-residue polypeptide: Ornithine carbamoyltransferase (306 aa).

Carbamoyl phosphate contacts are provided by residues Ser51–Thr54, Gln78, Arg102, and His129–Gln132. L-ornithine is bound by residues Asn157, Asp221, and Ser225–Met226. Residues Cys261–Leu262 and Arg289 contribute to the carbamoyl phosphate site.

This sequence belongs to the aspartate/ornithine carbamoyltransferase superfamily. OTCase family.

The protein localises to the cytoplasm. The catalysed reaction is carbamoyl phosphate + L-ornithine = L-citrulline + phosphate + H(+). It functions in the pathway amino-acid biosynthesis; L-arginine biosynthesis; L-arginine from L-ornithine and carbamoyl phosphate: step 1/3. In terms of biological role, reversibly catalyzes the transfer of the carbamoyl group from carbamoyl phosphate (CP) to the N(epsilon) atom of ornithine (ORN) to produce L-citrulline. The protein is Ornithine carbamoyltransferase of Campylobacter hominis (strain ATCC BAA-381 / DSM 21671 / CCUG 45161 / LMG 19568 / NCTC 13146 / CH001A).